An 89-amino-acid polypeptide reads, in one-letter code: Small ribosomal subunit protein uS15 (89 aa).

This sequence belongs to the universal ribosomal protein uS15 family. In terms of assembly, part of the 30S ribosomal subunit. Forms a bridge to the 50S subunit in the 70S ribosome, contacting the 23S rRNA.

Its function is as follows. One of the primary rRNA binding proteins, it binds directly to 16S rRNA where it helps nucleate assembly of the platform of the 30S subunit by binding and bridging several RNA helices of the 16S rRNA. Forms an intersubunit bridge (bridge B4) with the 23S rRNA of the 50S subunit in the ribosome. The chain is Small ribosomal subunit protein uS15 from Streptococcus pyogenes serotype M1.